The chain runs to 230 residues: Fibrillarin-like rRNA/tRNA 2'-O-methyltransferase (230 aa).

S-adenosyl-L-methionine contacts are provided by residues 87-88 (TT), 105-106 (EF), 130-131 (DA), and 150-153 (DVAQ).

This sequence belongs to the methyltransferase superfamily. Fibrillarin family. As to quaternary structure, interacts with nop5. Component of box C/D small ribonucleoprotein (sRNP) particles that contain rpl7ae, FlpA and nop5, plus a guide RNA.

In terms of biological role, involved in pre-rRNA and tRNA processing. Utilizes the methyl donor S-adenosyl-L-methionine to catalyze the site-specific 2'-hydroxyl methylation of ribose moieties in rRNA and tRNA. Site specificity is provided by a guide RNA that base pairs with the substrate. Methylation occurs at a characteristic distance from the sequence involved in base pairing with the guide RNA. In Methanococcus vannielii (strain ATCC 35089 / DSM 1224 / JCM 13029 / OCM 148 / SB), this protein is Fibrillarin-like rRNA/tRNA 2'-O-methyltransferase.